Here is a 456-residue protein sequence, read N- to C-terminus: Argininosuccinate lyase (456 aa).

Belongs to the lyase 1 family. Argininosuccinate lyase subfamily.

The protein localises to the cytoplasm. The enzyme catalyses 2-(N(omega)-L-arginino)succinate = fumarate + L-arginine. The protein operates within amino-acid biosynthesis; L-arginine biosynthesis; L-arginine from L-ornithine and carbamoyl phosphate: step 3/3. This is Argininosuccinate lyase from Shewanella amazonensis (strain ATCC BAA-1098 / SB2B).